The chain runs to 153 residues: SsrA-binding protein (153 aa).

The protein belongs to the SmpB family.

The protein resides in the cytoplasm. In terms of biological role, required for rescue of stalled ribosomes mediated by trans-translation. Binds to transfer-messenger RNA (tmRNA), required for stable association of tmRNA with ribosomes. tmRNA and SmpB together mimic tRNA shape, replacing the anticodon stem-loop with SmpB. tmRNA is encoded by the ssrA gene; the 2 termini fold to resemble tRNA(Ala) and it encodes a 'tag peptide', a short internal open reading frame. During trans-translation Ala-aminoacylated tmRNA acts like a tRNA, entering the A-site of stalled ribosomes, displacing the stalled mRNA. The ribosome then switches to translate the ORF on the tmRNA; the nascent peptide is terminated with the 'tag peptide' encoded by the tmRNA and targeted for degradation. The ribosome is freed to recommence translation, which seems to be the essential function of trans-translation. In Macrococcus caseolyticus (strain JCSC5402) (Macrococcoides caseolyticum), this protein is SsrA-binding protein.